A 282-amino-acid chain; its full sequence is MSSYANHQALAGLTLGKSTDYRDTYDASLLQGVPRSLNRDPLGLKADNLPFQGTDIWTLYELSWLNAKGLPQVAVGHVELDYTSVNLIESKSFKLYLNSFNQTRFNNWDEVRQTLERDLSTCAQGEVSVALYRLDELEGQPIGHFNGTCIDDQDITIDNYEFTTDYLENATSGEKVVEETLVSHLLKSNCLITHQPDWGSIQIQYRGRQIDREKLLRYLVSFRHHNEFHEQCVERIFNDLLRFCQPEKLSVYARYTRRGGLDINPWRSNSDFVPSTTRLVRQ.

Substrate is bound at residue 88–90 (IES). 90–91 (SK) is an NADPH binding site. The active-site Thioimide intermediate is the Cys-190. The active-site Proton donor is the Asp-197. 229 to 230 (HE) contacts substrate. 258–259 (RG) lines the NADPH pocket.

This sequence belongs to the GTP cyclohydrolase I family. QueF type 2 subfamily. Homodimer.

It is found in the cytoplasm. The catalysed reaction is 7-aminomethyl-7-carbaguanine + 2 NADP(+) = 7-cyano-7-deazaguanine + 2 NADPH + 3 H(+). It participates in tRNA modification; tRNA-queuosine biosynthesis. Catalyzes the NADPH-dependent reduction of 7-cyano-7-deazaguanine (preQ0) to 7-aminomethyl-7-deazaguanine (preQ1). The chain is NADPH-dependent 7-cyano-7-deazaguanine reductase from Escherichia coli O157:H7.